Reading from the N-terminus, the 400-residue chain is MSTGSLPLGLPSRDSLDGLRNSVDLPLLAAAALLLGLGLIMVASASMDLGERYYGNTWHFFQRQVLFAAIGLALATVMWAIPLERWERAGPWLLILVMVLLIAVLLPGVGRTVNGATRWIPIGMFNLQVAEPVKLLVVMYLAGYIVRHYSALRLHLRGFVRPLVVLGFGTVLLLLQPDFGGAAIMLAIGMGMLFLAGAKLWQFAALGATIAVGMAFVAVAAPYRVARLTAFLDPWQDPFATGFQLTQSLIAIGSGGWFGTGLGNSVQKLFYLPEAHNDFLFAVFAEEFGFIGVLALIALFAVVVWRCVKIGLWAERAGHAFGSHLAFGVAIWLALQSALNLAVNMGLLPTKGMTLPFLSYGGSSLIVTLMAIGLVMRVYREAQIPAPRQSTPPRRKRGQA.

The Cytoplasmic portion of the chain corresponds to Met1–Asp24. Residues Leu25–Ala45 traverse the membrane as a helical segment. Residues Ser46 to Arg63 lie on the Periplasmic side of the membrane. The chain crosses the membrane as a helical span at residues Gln64–Glu84. The Cytoplasmic portion of the chain corresponds to Arg85 to Arg88. The chain crosses the membrane as a helical span at residues Ala89–Val109. At Gly110–Arg118 the chain is on the periplasmic side. A helical transmembrane segment spans residues Trp119–Met139. At Tyr140–Arg153 the chain is on the cytoplasmic side. The chain crosses the membrane as a helical span at residues Leu154–Leu174. Residues Leu175 to Pro177 lie on the Periplasmic side of the membrane. The chain crosses the membrane as a helical span at residues Asp178–Ala198. Position 199 (Lys199) is a topological domain, cytoplasmic. The chain crosses the membrane as a helical span at residues Leu200–Ala220. The Periplasmic segment spans residues Ala221–Asp278. A helical transmembrane segment spans residues Phe279–Leu299. The Cytoplasmic segment spans residues Phe300–His324. A helical membrane pass occupies residues Leu325–Met345. At Gly346–Thr354 the chain is on the periplasmic side. Residues Leu355 to Val375 form a helical membrane-spanning segment. Over Met376–Ala400 the chain is Cytoplasmic.

The protein belongs to the SEDS family. FtsW subfamily.

Its subcellular location is the cell inner membrane. It catalyses the reaction [GlcNAc-(1-&gt;4)-Mur2Ac(oyl-L-Ala-gamma-D-Glu-L-Lys-D-Ala-D-Ala)](n)-di-trans,octa-cis-undecaprenyl diphosphate + beta-D-GlcNAc-(1-&gt;4)-Mur2Ac(oyl-L-Ala-gamma-D-Glu-L-Lys-D-Ala-D-Ala)-di-trans,octa-cis-undecaprenyl diphosphate = [GlcNAc-(1-&gt;4)-Mur2Ac(oyl-L-Ala-gamma-D-Glu-L-Lys-D-Ala-D-Ala)](n+1)-di-trans,octa-cis-undecaprenyl diphosphate + di-trans,octa-cis-undecaprenyl diphosphate + H(+). The protein operates within cell wall biogenesis; peptidoglycan biosynthesis. Peptidoglycan polymerase that is essential for cell division. The polypeptide is Probable peptidoglycan glycosyltransferase FtsW (Thioalkalivibrio sp. (strain K90mix)).